The primary structure comprises 489 residues: 3-octaprenyl-4-hydroxybenzoate carboxy-lyase (489 aa).

Asn172 is a binding site for Mn(2+). Prenylated FMN-binding positions include 175–177 (IYR), 189–191 (RWL), and 194–195 (RG). Glu238 lines the Mn(2+) pocket. Residue Asp287 is the Proton donor of the active site.

The protein belongs to the UbiD family. In terms of assembly, homohexamer. Prenylated FMN is required as a cofactor. It depends on Mn(2+) as a cofactor.

Its subcellular location is the cell membrane. It catalyses the reaction a 4-hydroxy-3-(all-trans-polyprenyl)benzoate + H(+) = a 2-(all-trans-polyprenyl)phenol + CO2. It functions in the pathway cofactor biosynthesis; ubiquinone biosynthesis. Functionally, catalyzes the decarboxylation of 3-octaprenyl-4-hydroxy benzoate to 2-octaprenylphenol, an intermediate step in ubiquinone biosynthesis. The sequence is that of 3-octaprenyl-4-hydroxybenzoate carboxy-lyase from Klebsiella pneumoniae (strain 342).